We begin with the raw amino-acid sequence, 229 residues long: Large ribosomal subunit protein uL1 (229 aa).

It belongs to the universal ribosomal protein uL1 family. In terms of assembly, part of the 50S ribosomal subunit.

Functionally, binds directly to 23S rRNA. The L1 stalk is quite mobile in the ribosome, and is involved in E site tRNA release. Its function is as follows. Protein L1 is also a translational repressor protein, it controls the translation of the L11 operon by binding to its mRNA. This Clostridium acetobutylicum (strain ATCC 824 / DSM 792 / JCM 1419 / IAM 19013 / LMG 5710 / NBRC 13948 / NRRL B-527 / VKM B-1787 / 2291 / W) protein is Large ribosomal subunit protein uL1.